Here is a 303-residue protein sequence, read N- to C-terminus: Probable cell division protein WhiA (303 aa).

A DNA-binding region (H-T-H motif) is located at residues 272–303 (SIQQIADSLAVPLTKSGVNHRLRKINKIAEDL).

Belongs to the WhiA family.

In terms of biological role, involved in cell division and chromosome segregation. This Streptococcus mutans serotype c (strain ATCC 700610 / UA159) protein is Probable cell division protein WhiA.